A 179-amino-acid chain; its full sequence is Archaemetzincin (179 aa).

Residue H128 coordinates Zn(2+). E129 functions as the Proton acceptor in the catalytic mechanism. Zn(2+)-binding residues include H132, H138, C139, C144, C163, and C166.

It belongs to the peptidase M54 family. As to quaternary structure, monomer. The cofactor is Zn(2+).

Functionally, probable zinc metalloprotease whose natural substrate is unknown. In Methanocaldococcus jannaschii (strain ATCC 43067 / DSM 2661 / JAL-1 / JCM 10045 / NBRC 100440) (Methanococcus jannaschii), this protein is Archaemetzincin.